The chain runs to 366 residues: ADP-ribosylarginine hydrolase Tri1 (366 aa).

The tract at residues 1–65 (MIDLREDTWT…LNTPPCLIPE (65 aa)) is N-terminal extension. The interval 74 to 366 (GALVGLAIGD…LFYMAPEEDF (293 aa)) is ADP-ribosyl hydrolase domain. Residues Thr-116, Asp-117, Asp-118, Asp-161, and Asp-317 each contribute to the Mg(2+) site.

Belongs to the ADP-ribosylglycohydrolase family. Forms a stable complex with cognate effector protein Tre1-Sp. The cofactor is Mg(2+).

It catalyses the reaction N(omega)-(ADP-D-ribosyl)-L-arginyl-[protein] + H2O = ADP-D-ribose + L-arginyl-[protein]. Its function is as follows. Immunity component of a contact-dependent interbacterial competition system (also called effector-immunity systems). Acts as an arginine mono-ADP-ribosylhydrolase, mediating the removal of mono-ADP-ribose attached to arginine residues on proteins. De-ADP-ribosylates FtsZ, is able to act on other proteins as well. Neutralizes the toxic activity of cognate toxin Tre1-Sp. Expression of this protein alone in E.coli partially protects the cells against competition by wild-type S.proteamaculans. Neutralizes Tre1-Sp both by occluding its active site via its N-terminal extension and by hydrolyzing the ADP-ribosyl moiety from FtsZ; the 2 activities are dissociable by mutagenesis. In Serratia proteamaculans (strain 568), this protein is ADP-ribosylarginine hydrolase Tri1.